A 123-amino-acid polypeptide reads, in one-letter code: Large ribosomal subunit protein bL17 (123 aa).

It belongs to the bacterial ribosomal protein bL17 family. As to quaternary structure, part of the 50S ribosomal subunit. Contacts protein L32.

This is Large ribosomal subunit protein bL17 from Borreliella burgdorferi (strain ZS7) (Borrelia burgdorferi).